The chain runs to 383 residues: MSTWLLPENIADVLPSEARKIEELRRHLLDRFRSYGYEMVMPPLLEYIESLLTGGGHDLNLRTFKLVDQLSGRTLGLRADITPQVARIDAHLLNRQGVTRLCYAGNVAHTRPRGLHATREQIQIGAEIYGHAGLEADLEIQQLMLDALRLAGLAKVRLDLCHAGVLAALIEAEPAAAELGQSLYDALAGKDVPRLVELTANLTPVIRDALRALPTLYGDASVLDEARARLPNAPAIARALDDLAFLASQVEGAEVMIDLADLRGYAYHSGVMFSAYVDGVPNAVARGGRYDHVGQAYGRARAATGFSLDLREVARISPVEARSSAILAPWQHDEALRVSVAALRDAGEVVIQALPGHEHDLDEFAFDRVLVERNGNWVVEARA.

Belongs to the class-II aminoacyl-tRNA synthetase family. HisZ subfamily. In terms of assembly, heteromultimer composed of HisG and HisZ subunits.

It is found in the cytoplasm. It participates in amino-acid biosynthesis; L-histidine biosynthesis; L-histidine from 5-phospho-alpha-D-ribose 1-diphosphate: step 1/9. Its function is as follows. Required for the first step of histidine biosynthesis. May allow the feedback regulation of ATP phosphoribosyltransferase activity by histidine. The chain is ATP phosphoribosyltransferase regulatory subunit from Paraburkholderia phytofirmans (strain DSM 17436 / LMG 22146 / PsJN) (Burkholderia phytofirmans).